The primary structure comprises 124 residues: UPF0344 protein BH2983 (124 aa).

Transmembrane regions (helical) follow at residues 15-35 (GSWA…KAGK), 40-60 (KILH…GAGM), 61-81 (LVYW…IVLI), and 102-122 (IYWI…YNVI).

This sequence belongs to the UPF0344 family.

The protein resides in the cell membrane. The sequence is that of UPF0344 protein BH2983 from Halalkalibacterium halodurans (strain ATCC BAA-125 / DSM 18197 / FERM 7344 / JCM 9153 / C-125) (Bacillus halodurans).